The chain runs to 124 residues: MDTMGRHVISELWGCDFDKLNDMEFIEKTFVDAALKSGAEIREVAFHKFAPQGVSGVVIISESHLTIHSFPEHGYASIDVYTCGHLDPTIAADYIAEALGAQTRETIELPRGMGPIEIKQAKAL.

Catalysis depends on S63, which acts as the Schiff-base intermediate with substrate; via pyruvic acid. At S63 the chain carries Pyruvic acid (Ser); by autocatalysis. H68 serves as the catalytic Proton acceptor; for processing activity. The Proton donor; for catalytic activity role is filled by C83.

It belongs to the prokaryotic AdoMetDC family. Type 1 subfamily. In terms of assembly, heterotetramer of two alpha and two beta chains arranged as a dimer of alpha/beta heterodimers. Pyruvate serves as cofactor. Post-translationally, is synthesized initially as an inactive proenzyme. Formation of the active enzyme involves a self-maturation process in which the active site pyruvoyl group is generated from an internal serine residue via an autocatalytic post-translational modification. Two non-identical subunits are generated from the proenzyme in this reaction, and the pyruvate is formed at the N-terminus of the alpha chain, which is derived from the carboxyl end of the proenzyme. The post-translation cleavage follows an unusual pathway, termed non-hydrolytic serinolysis, in which the side chain hydroxyl group of the serine supplies its oxygen atom to form the C-terminus of the beta chain, while the remainder of the serine residue undergoes an oxidative deamination to produce ammonia and the pyruvoyl group blocking the N-terminus of the alpha chain.

It carries out the reaction S-adenosyl-L-methionine + H(+) = S-adenosyl 3-(methylsulfanyl)propylamine + CO2. Its pathway is amine and polyamine biosynthesis; S-adenosylmethioninamine biosynthesis; S-adenosylmethioninamine from S-adenosyl-L-methionine: step 1/1. Catalyzes the decarboxylation of S-adenosylmethionine to S-adenosylmethioninamine (dcAdoMet), the propylamine donor required for the synthesis of the polyamines spermine and spermidine from the diamine putrescine. The chain is S-adenosylmethionine decarboxylase proenzyme from Anoxybacillus flavithermus (strain DSM 21510 / WK1).